The following is a 357-amino-acid chain: Chorismate synthase (357 aa).

Residue Arg-47 participates in NADP(+) binding. FMN is bound by residues 123–125, Gly-281, 296–300, and Arg-324; these read RAS and KPTSS.

This sequence belongs to the chorismate synthase family. As to quaternary structure, homotetramer. FMNH2 serves as cofactor.

It carries out the reaction 5-O-(1-carboxyvinyl)-3-phosphoshikimate = chorismate + phosphate. The protein operates within metabolic intermediate biosynthesis; chorismate biosynthesis; chorismate from D-erythrose 4-phosphate and phosphoenolpyruvate: step 7/7. Functionally, catalyzes the anti-1,4-elimination of the C-3 phosphate and the C-6 proR hydrogen from 5-enolpyruvylshikimate-3-phosphate (EPSP) to yield chorismate, which is the branch point compound that serves as the starting substrate for the three terminal pathways of aromatic amino acid biosynthesis. This reaction introduces a second double bond into the aromatic ring system. The polypeptide is Chorismate synthase (Chlamydia trachomatis serovar L2 (strain ATCC VR-902B / DSM 19102 / 434/Bu)).